An 800-amino-acid chain; its full sequence is Phenylalanine--tRNA ligase beta subunit (800 aa).

The 116-residue stretch at 39-154 (TKDIKNLVVG…ESQVPGTDAL (116 aa)) folds into the tRNA-binding domain. The B5 domain maps to 408 to 483 (AFITPIDITA…RIYGYDDIPS (76 aa)). 4 residues coordinate Mg(2+): Asp461, Asp467, Glu470, and Glu471. Residues 708-800 (PRFPGMSRDI…ALIEQGAVIR (93 aa)) enclose the FDX-ACB domain.

It belongs to the phenylalanyl-tRNA synthetase beta subunit family. Type 1 subfamily. Tetramer of two alpha and two beta subunits. Mg(2+) is required as a cofactor.

It is found in the cytoplasm. The catalysed reaction is tRNA(Phe) + L-phenylalanine + ATP = L-phenylalanyl-tRNA(Phe) + AMP + diphosphate + H(+). This Staphylococcus aureus (strain MRSA252) protein is Phenylalanine--tRNA ligase beta subunit.